Consider the following 171-residue polypeptide: Lipoprotein signal peptidase (171 aa).

The next 4 helical transmembrane spans lie at 12–32 (LAWL…KLYF), 42–62 (IVVI…AAFS), 70–90 (WQRW…VVWL), and 96–116 (NETW…GNLY). Residues Asp-126 and Asp-145 contribute to the active site. A helical membrane pass occupies residues 137 to 157 (YFPAFNVADSAITVGAVMLAL).

This sequence belongs to the peptidase A8 family.

Its subcellular location is the cell inner membrane. It catalyses the reaction Release of signal peptides from bacterial membrane prolipoproteins. Hydrolyzes -Xaa-Yaa-Zaa-|-(S,diacylglyceryl)Cys-, in which Xaa is hydrophobic (preferably Leu), and Yaa (Ala or Ser) and Zaa (Gly or Ala) have small, neutral side chains.. The protein operates within protein modification; lipoprotein biosynthesis (signal peptide cleavage). Its function is as follows. This protein specifically catalyzes the removal of signal peptides from prolipoproteins. This chain is Lipoprotein signal peptidase, found in Pseudomonas putida (strain ATCC 47054 / DSM 6125 / CFBP 8728 / NCIMB 11950 / KT2440).